The following is a 427-amino-acid chain: Interferon regulatory factor 3 (427 aa).

At Thr3 the chain carries Phosphothreonine. The IRF tryptophan pentad repeat DNA-binding region spans 5-111 (KPRILPWLVS…DPHKIYEFVN (107 aa)). Ser14 carries the phosphoserine modification. Thr75 bears the Phosphothreonine mark. Residues 91–107 (RLAEDRSKDPHDPHKIY) are compositionally biased toward basic and acidic residues. The interval 91-136 (RLAEDRSKDPHDPHKIYEFVNSGVGDFSQPDTSPDTNGGGSTSDTQ) is disordered. Residues Ser97 and Ser123 each carry the phosphoserine modification. The short motif at 139 to 149 (ILDELLGNMVL) is the Nuclear export signal element. A mediates interaction with ZDHHC11 region spans residues 141–427 (DELLGNMVLA…GMDFQGPGES (287 aa)). Ser175 is subject to (Microbial infection) Phosphoserine. Thr180 bears the Phosphothreonine mark. Residue Ser188 is modified to Phosphoserine. Lys193 is covalently cross-linked (Glycyl lysine isopeptide (Lys-Gly) (interchain with G-Cter in ISG15)). Residues 200-360 (EEWEFEVTAF…SWPQDQPWTK (161 aa)) are interaction with HERC5. A phosphothreonine mark is found at Thr237, Thr244, and Thr253. Cys267 and Cys289 are disulfide-bonded. Glycyl lysine isopeptide (Lys-Gly) (interchain with G-Cter in ISG15) cross-links involve residues Lys360 and Lys366. The residue at position 366 (Lys366) is an N6-acetyllysine. At Ser385 the chain carries Phosphoserine. Position 386 is a diphosphoserine (Ser386). Phosphoserine; by TBK1 is present on Ser386. Ser396 is subject to Phosphoserine; by IKKE and TBK1. A Phosphoserine modification is found at Ser398. Position 404 is a phosphothreonine (Thr404). The residue at position 427 (Ser427) is a Phosphoserine.

This sequence belongs to the IRF family. As to quaternary structure, monomer. Homodimer; phosphorylation-induced. Interacts (when phosphorylated) with CREBBP. Interacts with MAVS (via phosphorylated pLxIS motif). Interacts with TICAM1 (via phosphorylated pLxIS motif). Interacts with STING1 (via phosphorylated pLxIS motif). Interacts with IKBKE and TBK1. Interacts with TICAM2. Interacts with RBCK1. Interacts with HERC5. Interacts with DDX3X (phosphorylated at 'Ser-102'); the interaction allows the phosphorylation and activation of IRF3 by IKBKE. Interacts with TRIM21 and ULK1, in the presence of TRIM21; this interaction leads to IRF3 degradation by autophagy. Interacts with RIOK3; RIOK3 probably mediates the interaction of TBK1 with IRF3. Interacts with ILRUN; the interaction inhibits IRF3 binding to its DNA consensus sequence. Interacts with LYAR; this interaction impairs IRF3 DNA-binding activity. Interacts with TRAF3. Interacts with ZDHHC11; ZDHHC11 recruits IRF3 to STING1 upon DNA virus infection and thereby promotes IRF3 activation. Interacts with HSP90AA1; the interaction mediates IRF3 association with TOMM70. Interacts with BCL2; the interaction decreases upon Sendai virus infection. Interacts with BAX; the interaction is direct, increases upon Sendai virus infection and mediates the formation of the apoptosis complex TOMM70:HSP90AA1:IRF3:BAX. Interacts with DDX56. Interacts with NBR1. (Microbial infection) Interacts with rotavirus A NSP1 (via pLxIS motif); this interaction leads to the proteasome-dependent degradation of IRF3. In terms of assembly, (Microbial infection) Interacts with herpes virus 8/HHV-8 protein VIRF1. As to quaternary structure, (Microbial infection) Interacts with Seneca Valley virus protease 3C; this interaction is involved in the suppression of IRF3 expression and phosphorylation by the virus. (Microbial infection) Interacts with herpes virus 2/HHV-2 protein ICP27; this interaction inhibits IRF3 phosphorylation and nuclear translocation. In terms of assembly, (Microbial infection) Interacts with human cytomegalovirus protein UL44; this interaction prevents IRF3 binding to its promoters. As to quaternary structure, (Microbial infection) Interacts with the two fragments of MERS-COV protein N produced by CASP6 through proteolytic cleavage; both interactions inhibit IRF3 nuclear translocation after activation and IFN signaling. Post-translationally, constitutively phosphorylated on many Ser/Thr residues. Activated following phosphorylation by TBK1 and IKBKE. Innate adapter proteins, such as MAVS, STING1 or TICAM1, are first activated by viral RNA, cytosolic DNA, and bacterial lipopolysaccharide (LPS), respectively, leading to activation of the kinases TBK1 and IKBKE. These kinases then phosphorylate the adapter proteins on the pLxIS motif, leading to recruitment of IRF3, thereby licensing IRF3 for phosphorylation by TBK1. Phosphorylation at Ser-386 is followed by pyrophosphorylation at the same residue, promoting phosphorylation at Ser-396. Phosphorylated IRF3 dissociates from the adapter proteins, dimerizes, and then enters the nucleus to induce IFNs. In terms of processing, pyrophosphorylated by UAP1 following phosphorylation at Ser-386 by TBK1. Pyrophosphorylation promotes subsequent phosphorylation at Ser-396, leading to homodimerization of IRF3. Acetylation at Lys-366 by KAT8 inhibits recruimtent to promoters and transcription factor activity. Acetylation by KAT8 is promoted by phosphorylation at Ser-396. Post-translationally, ubiquitinated; ubiquitination involves RBCK1 leading to proteasomal degradation. Polyubiquitinated; ubiquitination involves TRIM21 leading to proteasomal degradation. Ubiquitinated by UBE3C, leading to its degradation. Deubiquitinated by USP5 on both 'Lys-48'-linked unanchored and 'Lys-63'-linked anchored polyubiquitin, leading to inhibition of anti-RNA viral innate immunity. In terms of processing, ISGylated by HERC5 resulting in sustained IRF3 activation and in the inhibition of IRF3 ubiquitination by disrupting PIN1 binding. The phosphorylation state of IRF3 does not alter ISGylation. Proteolytically cleaved by apoptotic caspases during apoptosis, leading to its inactivation. Cleavage by CASP3 during virus-induced apoptosis inactivates it, preventing cytokine overproduction. Post-translationally, (Microbial infection) ISGylated. ISGylation is cleaved and removed by SARS-COV-2 nsp3 which attenuates type I interferon responses. In terms of processing, (Microbial infection) Phosphorylation and subsequent activation of IRF3 is inhibited by vaccinia virus protein E3. (Microbial infection) Phosphorylated by herpes simplex virus 1/HHV-1 US3 at Ser-175 to prevent IRF3 activation. In terms of tissue distribution, expressed constitutively in a variety of tissues.

Its subcellular location is the cytoplasm. It is found in the nucleus. The protein localises to the mitochondrion. Its activity is regulated as follows. In the absence of viral infection, maintained as a monomer in an autoinhibited state. Phosphorylation by TBK1 and IKBKE disrupts this autoinhibition leading to the liberation of the DNA-binding and dimerization activities and its nuclear localization where it can activate type I IFN and ISG genes. Phosphorylation and activation follow the following steps: innate adapter proteins, such as MAVS, STING1 or TICAM1, are first activated by viral RNA, cytosolic DNA and bacterial lipopolysaccharide (LPS), respectively, leading to activation of the kinases TBK1 and IKBKE. These kinases then phosphorylate the adapter proteins on their pLxIS motif, leading to recruitment of IRF3, thereby licensing IRF3 for phosphorylation by TBK1. Phosphorylated IRF3 dissociates from the adapter proteins, dimerizes, and then enters the nucleus to induce IFNs. (Microbial infection) Activated upon coronavirus SARS-CoV-2 infection. Key transcriptional regulator of type I interferon (IFN)-dependent immune responses which plays a critical role in the innate immune response against DNA and RNA viruses. Regulates the transcription of type I IFN genes (IFN-alpha and IFN-beta) and IFN-stimulated genes (ISG) by binding to an interferon-stimulated response element (ISRE) in their promoters. Acts as a more potent activator of the IFN-beta (IFNB) gene than the IFN-alpha (IFNA) gene and plays a critical role in both the early and late phases of the IFNA/B gene induction. Found in an inactive form in the cytoplasm of uninfected cells and following viral infection, double-stranded RNA (dsRNA), or toll-like receptor (TLR) signaling, is phosphorylated by IKBKE and TBK1 kinases. This induces a conformational change, leading to its dimerization and nuclear localization and association with CREB binding protein (CREBBP) to form dsRNA-activated factor 1 (DRAF1), a complex which activates the transcription of the type I IFN and ISG genes. Can activate distinct gene expression programs in macrophages and can induce significant apoptosis in primary macrophages. In response to Sendai virus infection, is recruited by TOMM70:HSP90AA1 to mitochondrion and forms an apoptosis complex TOMM70:HSP90AA1:IRF3:BAX inducing apoptosis. Key transcription factor regulating the IFN response during SARS-CoV-2 infection. This Homo sapiens (Human) protein is Interferon regulatory factor 3.